Reading from the N-terminus, the 382-residue chain is MIATTGKVNLLGLTQPQLESFFESIGEKRFRAGQVMKWIHHFGVDDFDAMSNLGKALREKLKACAEIRGPEIVSEDISSDGTRKWVVRVASGSCVETVYIPQGGRGTLCVSSQAGCALDCSFCSTGKQGFNSNLTAAEVIGQVWIANKSFGTVPAKIDRAITNVVMMGMGEPLLNFDNVVAAMQIMMDDLGYGISKRKVTLSTSGVVPMIDELAKVIDVSLALSLHAPNEALRDQLVPINKKYPLDVLLAACKRYVSRLGEKRVLTIEYTLLKGVNDQPEHAEQMIALLADIPCKINLIPFNPFPHSGYERPSNNAIRRFQDILHKGGHNVTVRTTRGEDIDAACGQLVGQVLDRTRRSERYIAVRELQSEPGAAQTASNRS.

Glutamate 96 serves as the catalytic Proton acceptor. A Radical SAM core domain is found at 102-342; it reads QGGRGTLCVS…VRTTRGEDID (241 aa). Cysteine 109 and cysteine 345 are disulfide-bonded. Cysteine 116, cysteine 120, and cysteine 123 together coordinate [4Fe-4S] cluster. Residues 170–171, serine 202, 224–226, and asparagine 302 contribute to the S-adenosyl-L-methionine site; these read GE and SLH. Cysteine 345 acts as the S-methylcysteine intermediate in catalysis.

Belongs to the radical SAM superfamily. RlmN family. Requires [4Fe-4S] cluster as cofactor.

It localises to the cytoplasm. It catalyses the reaction adenosine(2503) in 23S rRNA + 2 reduced [2Fe-2S]-[ferredoxin] + 2 S-adenosyl-L-methionine = 2-methyladenosine(2503) in 23S rRNA + 5'-deoxyadenosine + L-methionine + 2 oxidized [2Fe-2S]-[ferredoxin] + S-adenosyl-L-homocysteine. The enzyme catalyses adenosine(37) in tRNA + 2 reduced [2Fe-2S]-[ferredoxin] + 2 S-adenosyl-L-methionine = 2-methyladenosine(37) in tRNA + 5'-deoxyadenosine + L-methionine + 2 oxidized [2Fe-2S]-[ferredoxin] + S-adenosyl-L-homocysteine. Its function is as follows. Specifically methylates position 2 of adenine 2503 in 23S rRNA and position 2 of adenine 37 in tRNAs. m2A2503 modification seems to play a crucial role in the proofreading step occurring at the peptidyl transferase center and thus would serve to optimize ribosomal fidelity. The chain is Dual-specificity RNA methyltransferase RlmN from Stutzerimonas stutzeri (strain A1501) (Pseudomonas stutzeri).